The primary structure comprises 525 residues: Signal recognition particle protein (525 aa).

Residues Gly107–Thr114, Asp196–Arg200, and Thr254–Asp257 contribute to the GTP site. Residues Gly437 to Lys525 form a disordered region. Basic residues predominate over residues Ser447–Thr467. Residues Gly480–Leu497 show a composition bias toward low complexity.

The protein belongs to the GTP-binding SRP family. SRP54 subfamily. In terms of assembly, part of the signal recognition particle protein translocation system, which is composed of SRP and FtsY.

The protein localises to the cytoplasm. The enzyme catalyses GTP + H2O = GDP + phosphate + H(+). Involved in targeting and insertion of nascent membrane proteins into the cytoplasmic membrane. Binds to the hydrophobic signal sequence of the ribosome-nascent chain (RNC) as it emerges from the ribosomes. The SRP-RNC complex is then targeted to the cytoplasmic membrane where it interacts with the SRP receptor FtsY. This is Signal recognition particle protein from Mycobacterium bovis (strain ATCC BAA-935 / AF2122/97).